The primary structure comprises 321 residues: GDP-L-fucose synthase (321 aa).

Residue 14–20 (GGSGLVG) participates in NADP(+) binding. Tyr-143 functions as the Proton donor/acceptor in the catalytic mechanism. Residues Lys-147, 170–173 (PTNV), and His-186 each bind NADP(+). Substrate-binding residues include Lys-194, Trp-208, Arg-215, and Asp-277.

It belongs to the NAD(P)-dependent epimerase/dehydratase family. Fucose synthase subfamily. Homodimer.

The enzyme catalyses GDP-beta-L-fucose + NADP(+) = GDP-4-dehydro-alpha-D-rhamnose + NADPH + H(+). The protein operates within nucleotide-sugar biosynthesis; GDP-L-fucose biosynthesis via de novo pathway; GDP-L-fucose from GDP-alpha-D-mannose: step 2/2. Its function is as follows. Catalyzes the two-step NADP-dependent conversion of GDP-4-dehydro-6-deoxy-D-mannose to GDP-fucose, involving an epimerase and a reductase reaction. The sequence is that of GDP-L-fucose synthase (GFUS) from Cricetulus griseus (Chinese hamster).